An 86-amino-acid polypeptide reads, in one-letter code: Dynein light chain 1, cytoplasmic (86 aa).

The protein belongs to the dynein light chain family. Homodimer. Cytoplasmic dynein consists of two catalytic heavy chains (HCs) and a number of non-catalytic subunits which present intermediate chains (ICs), light intermediate chains (LICs) and light chains (LCs). Component of the nuclear pore complex (NPC). NPC constitutes the exclusive means of nucleocytoplasmic transport. NPCs allow the passive diffusion of ions and small molecules and the active, nuclear transport receptor-mediated bidirectional transport of macromolecules such as proteins, RNAs, ribonucleoparticles (RNPs), and ribosomal subunits across the nuclear envelope. Due to its 8-fold rotational symmetry, all subunits are present with 8 copies or multiples thereof.

It localises to the cytoplasm. The protein localises to the cytoskeleton. It is found in the nucleus. Its subcellular location is the nuclear pore complex. Acts as one of several non-catalytic accessory components of the cytoplasmic dynein complex that are thought to be involved in linking dynein to cargos and to adapter proteins that regulate dynein function. Cytoplasmic dynein 1 acts as a motor for the intracellular retrograde motility of vesicles and organelles along microtubules. May play a role in changing or maintaining the spatial distribution of cytoskeletal structures. Also a component of the nuclear pore complex. The protein is Dynein light chain 1, cytoplasmic (DYN2) of Candida glabrata (strain ATCC 2001 / BCRC 20586 / JCM 3761 / NBRC 0622 / NRRL Y-65 / CBS 138) (Yeast).